We begin with the raw amino-acid sequence, 282 residues long: Insulin-like growth factor-binding protein 7 (282 aa).

The first 26 residues, 1–26 (MERPSLRALLLGAAGLLLLLLPLSSS), serve as a signal peptide directing secretion. The IGFBP N-terminal domain occupies 28-114 (SSDTCGPCEP…PGVSGVCVCK (87 aa)). 7 cysteine pairs are disulfide-bonded: cysteine 32/cysteine 57, cysteine 35/cysteine 59, cysteine 40/cysteine 60, cysteine 48/cysteine 63, cysteine 71/cysteine 87, cysteine 81/cysteine 111, and cysteine 120/cysteine 156. A Kazal-like domain is found at 105 to 158 (PGVSGVCVCKSRYPVCGSDGTTYPSGCQLRAASQRAESRGEKAITQVSKGTCEQ). Positions 160–264 (PSIVTPPKDI…GQASASAKIT (105 aa)) constitute an Ig-like C2-type domain. Asparagine 171 carries N-linked (GlcNAc...) asparagine glycosylation. Cysteine 181 and cysteine 248 are joined by a disulfide. Serine 239 bears the Phosphoserine; by FAM20C mark.

As to quaternary structure, may interact with VPS24/CHMP3; the relevance of such interaction however remains unclear. Interacts with CD93; this interaction plays a role in endothelial cells angiogenesis. Post-translationally, N-glycosylated.

It localises to the secreted. Binds IGF1 and IGF2 with a relatively low affinity. Stimulates prostacyclin (PGI2) production. Stimulates cell adhesion. Acts as a ligand for CD93 to play a role in angiogenesis. This Homo sapiens (Human) protein is Insulin-like growth factor-binding protein 7 (IGFBP7).